We begin with the raw amino-acid sequence, 85 residues long: MAGDDSISTLGMILGVGLSLLLVSILGYSLAKWYQRGYCWDGPNFVFNLYQIRNLKDLEVGPPFTISGHMSSPDGGYMKFSNDRV.

A helical membrane pass occupies residues 7–27 (ISTLGMILGVGLSLLLVSILG).

Its subcellular location is the membrane. The polypeptide is Small integral membrane protein 35 (Mus musculus (Mouse)).